Reading from the N-terminus, the 340-residue chain is MPMENDNGPHVGNVVVTAEQATKINETDGRLPENRQTGVVSDTGSGSERGEQGVGESAVAVAVPVEESGSISVGELPAPRSSSARVPFTNLSQIDADLALARTLQEQERAYMMLTMNSEISDYGSWETGSYVYDEDEFDDPENEDEDDDEDEYETDDDPQEDGLDVNVHANEDDQEDDGNSDIEEVAYTDDEAYARALQEAEERDMAARLSALSGLANRVVEDLEDESHTSQDAWDEMDPDELSYEELLALGDIVGTESRGLSADTIASLPSKRYKEGDNQNGTNESCVICRLDYEDDEDLILLPCKHSYHSECINNWLKINKVCPVCSAEVSTSTSGQS.

Disordered regions lie at residues 1-56 (MPME…GVGE) and 133-182 (YDED…GNSD). Polar residues predominate over residues 34–46 (NRQTGVVSDTGSG). Acidic residues-rich tracts occupy residues 133–164 (YDED…EDGL) and 173–182 (DDQEDDGNSD). Residues 288–329 (CVICRLDYEDDEDLILLPCKHSYHSECINNWLKINKVCPVCS) form an RING-type; atypical zinc finger.

Auto-ubiquitinated.

The enzyme catalyses S-ubiquitinyl-[E2 ubiquitin-conjugating enzyme]-L-cysteine + [acceptor protein]-L-lysine = [E2 ubiquitin-conjugating enzyme]-L-cysteine + N(6)-ubiquitinyl-[acceptor protein]-L-lysine.. The protein operates within protein modification; protein ubiquitination. Functionally, E3 ubiquitin-ligase probably involved in organ size regulation. The protein is E3 ubiquitin ligase BIG BROTHER-related (BBR) of Arabidopsis thaliana (Mouse-ear cress).